A 506-amino-acid polypeptide reads, in one-letter code: BTB/POZ domain-containing protein 16 (506 aa).

The region spanning 150 to 206 (INDPAVTRVAFALALKNLYMNEVEMTVDNVLGVLASAHILQFNRLFRKCVSTMLNRL) is the BTB domain.

The sequence is that of BTB/POZ domain-containing protein 16 (Btbd16) from Rattus norvegicus (Rat).